The sequence spans 395 residues: Ketol-acid reductoisomerase, mitochondrial (395 aa).

The N-terminal 47 residues, 1–47 (MLRTQAARLICNSRVITAKRTFALATRAAAYSRPAARFVKPMITTRG), are a transit peptide targeting the mitochondrion. Residues 57 to 246 (VETVYERADW…AIGSGYVYQT (190 aa)) form the KARI N-terminal Rossmann domain. NADP(+) contacts are provided by residues 84–93 (GYGSQGYGQG), 108–113 (RKDGAS), and 146–150 (SDAAQ). H171 is a catalytic residue. The region spanning 247–394 (TFEREVNSDL…KEVRKLRPEN (148 aa)) is the KARI C-terminal knotted domain. Mg(2+) contacts are provided by D255, E259, E291, and E295. S317 provides a ligand contact to substrate. S355 is subject to Phosphoserine. Residues 363 to 395 (DYREKLEKELDTIRNMEIWKVGKEVRKLRPENQ) form a hydrophilic region.

It belongs to the ketol-acid reductoisomerase family. It depends on Mg(2+) as a cofactor.

The protein localises to the mitochondrion. The catalysed reaction is (2R)-2,3-dihydroxy-3-methylbutanoate + NADP(+) = (2S)-2-acetolactate + NADPH + H(+). The enzyme catalyses (2R,3R)-2,3-dihydroxy-3-methylpentanoate + NADP(+) = (S)-2-ethyl-2-hydroxy-3-oxobutanoate + NADPH + H(+). It functions in the pathway amino-acid biosynthesis; L-isoleucine biosynthesis; L-isoleucine from 2-oxobutanoate: step 2/4. It participates in amino-acid biosynthesis; L-valine biosynthesis; L-valine from pyruvate: step 2/4. Involved in the biosynthesis of branched-chain amino acids (BCAA). Catalyzes the second common step in the parallel biosynthesis of isoleucine and valine. Converts alpha-aceto-alpha-hydroxybutyrate (AHB) to alpha,beta-dihydroxy-beta-methylvalerate (DHMV) and alpha-acetolactate (AL) to alpha,beta-dihydroxy-isovalerate (DHV) in isoleucine and valine biosynthesis, respectively. This is Ketol-acid reductoisomerase, mitochondrial from Saccharomyces cerevisiae (strain ATCC 204508 / S288c) (Baker's yeast).